Here is a 386-residue protein sequence, read N- to C-terminus: O-methyltransferase aunE (386 aa).

Tryptophan 200 contacts S-adenosyl-L-methionine. Catalysis depends on histidine 299, which acts as the Proton acceptor.

This sequence belongs to the class I-like SAM-binding methyltransferase superfamily. Cation-independent O-methyltransferase family.

It participates in secondary metabolite biosynthesis. Functionally, O-methyltransferase; part of the gene cluster that mediates the biosynthesis of aurasperone B, a dimeric gamma-naphthopyrone. The first step in the biosynthesis of aurasperone B is the production of gamma-naphthopyrone precursor YWA1 by the non-reducing polyketide synthase albA, via condensation of one acetyl-CoA starter unit with 6 malonyl-CoA units. YWA1 is then methylated by aunE at position C-6 to yield foncesin which is further methylated at position C-8 by aunD to produce fonsecin B. A key enzyme in the biosynthetic pathway is the cytochrome P450 monooxygenase aunB which catalyzes the oxidative dimerization of fonsecin B to aurasperone B. AunB also catalyzes the oxidative dimerization of rubrofusarin B into aurasperone A. This is O-methyltransferase aunE from Aspergillus niger (strain ATCC MYA-4892 / CBS 513.88 / FGSC A1513).